The primary structure comprises 396 residues: Diphosphomevalonate decarboxylase (396 aa).

(R)-5-diphosphomevalonate is bound by residues 19–22 (YWGK), Arg74, 153–158 (SGSACR), and Thr209.

Belongs to the diphosphomevalonate decarboxylase family. As to quaternary structure, homodimer.

It carries out the reaction (R)-5-diphosphomevalonate + ATP = isopentenyl diphosphate + ADP + phosphate + CO2. It participates in isoprenoid biosynthesis; isopentenyl diphosphate biosynthesis via mevalonate pathway; isopentenyl diphosphate from (R)-mevalonate: step 3/3. Diphosphomevalonate decarboxylase; part of the second module of ergosterol biosynthesis pathway that includes the middle steps of the pathway. MVD1/ERG19 converts diphosphomevalonate into isopentenyl diphosphate. The second module is carried out in the vacuole and involves the formation of farnesyl diphosphate, which is also an important intermediate in the biosynthesis of ubiquinone, dolichol, heme and prenylated proteins. Activity by the mevalonate kinase ERG12 first converts mevalonate into 5-phosphomevalonate. 5-phosphomevalonate is then further converted to 5-diphosphomevalonate by the phosphomevalonate kinase ERG8. The diphosphomevalonate decarboxylase MVD1/ERG19 then produces isopentenyl diphosphate. The isopentenyl-diphosphate delta-isomerase IDI1 then catalyzes the 1,3-allylic rearrangement of the homoallylic substrate isopentenyl (IPP) to its highly electrophilic allylic isomer, dimethylallyl diphosphate (DMAPP). Finally the farnesyl diphosphate synthase ERG20 catalyzes the sequential condensation of isopentenyl pyrophosphate with dimethylallyl pyrophosphate, and then with the resultant geranylpyrophosphate to the ultimate product farnesyl pyrophosphate. This chain is Diphosphomevalonate decarboxylase, found in Saccharomyces cerevisiae (strain ATCC 204508 / S288c) (Baker's yeast).